A 288-amino-acid polypeptide reads, in one-letter code: ATP phosphoribosyltransferase (288 aa).

The protein belongs to the ATP phosphoribosyltransferase family. Long subfamily. The cofactor is Mg(2+).

The protein localises to the cytoplasm. The catalysed reaction is 1-(5-phospho-beta-D-ribosyl)-ATP + diphosphate = 5-phospho-alpha-D-ribose 1-diphosphate + ATP. The protein operates within amino-acid biosynthesis; L-histidine biosynthesis; L-histidine from 5-phospho-alpha-D-ribose 1-diphosphate: step 1/9. With respect to regulation, feedback inhibited by histidine. Its function is as follows. Catalyzes the condensation of ATP and 5-phosphoribose 1-diphosphate to form N'-(5'-phosphoribosyl)-ATP (PR-ATP). Has a crucial role in the pathway because the rate of histidine biosynthesis seems to be controlled primarily by regulation of HisG enzymatic activity. The sequence is that of ATP phosphoribosyltransferase from Methanococcus maripaludis (strain C5 / ATCC BAA-1333).